A 763-amino-acid polypeptide reads, in one-letter code: Amine oxidase [copper-containing] 3 (763 aa).

The Cytoplasmic portion of the chain corresponds to 1–6; that stretch reads MNQKTT. A helical; Signal-anchor for type II membrane protein transmembrane segment spans residues 7–27; that stretch reads LVLLALAVITIFALVCVLIAG. Residues 28 to 763 are Extracellular-facing; the sequence is RGGDGGEASQ…AFSHGGFFTN (736 aa). N137 carries an N-linked (GlcNAc...) asparagine glycan. Cysteines 198 and 199 form a disulfide. 2 N-linked (GlcNAc...) asparagine glycosylation sites follow: N232 and N294. D386 functions as the Proton acceptor in the catalytic mechanism. A disulfide bridge links C404 with C430. Catalysis depends on Y471, which acts as the Schiff-base intermediate with substrate; via topaquinone. Y471 is subject to 2',4',5'-topaquinone. The Cu(2+) site is built by H520 and H522. 4 residues coordinate Ca(2+): D529, L530, D531, and E572. N-linked (GlcNAc...) asparagine glycosylation is present at N618. Ca(2+) is bound by residues E641, F663, and N665. Residue N666 is glycosylated (N-linked (GlcNAc...) asparagine). The Ca(2+) site is built by E667, D673, and L674. H684 is a binding site for Cu(2+). A disulfide bridge connects residues C734 and C741.

The protein belongs to the copper/topaquinone oxidase family. As to quaternary structure, homodimer; disulfide-linked. Probably forms heterodimers with AOC2. It depends on Cu(2+) as a cofactor. The cofactor is Ca(2+). L-topaquinone is required as a cofactor. Post-translationally, topaquinone (TPQ) is generated by copper-dependent autoxidation of a specific tyrosyl residue. In terms of processing, N- and O-glycosylated.

The protein resides in the cell membrane. It catalyses the reaction methylamine + O2 + H2O = formaldehyde + H2O2 + NH4(+). The enzyme catalyses benzylamine + O2 + H2O = benzaldehyde + H2O2 + NH4(+). The catalysed reaction is 2-phenylethylamine + O2 + H2O = 2-phenylacetaldehyde + H2O2 + NH4(+). Its function is as follows. Catalyzes the oxidative deamination of primary amines to the corresponding aldehydes with the concomitant production of hydrogen peroxide and ammonia. Has a preference for the primary monoamines methylamine and benzylamine. Could also act on 2-phenylethylamine but much less efficiently. At endothelial cells surface can also function as a cell adhesion protein that participates in lymphocyte extravasation and recirculation by mediating the binding of lymphocytes to peripheral lymph node vascular endothelial cells in an L-selectin-independent fashion. The protein is Amine oxidase [copper-containing] 3 of Bos taurus (Bovine).